The sequence spans 156 residues: Small ribosomal subunit protein uS7 (156 aa).

It belongs to the universal ribosomal protein uS7 family. Part of the 30S ribosomal subunit. Contacts proteins S9 and S11.

One of the primary rRNA binding proteins, it binds directly to 16S rRNA where it nucleates assembly of the head domain of the 30S subunit. Is located at the subunit interface close to the decoding center, probably blocks exit of the E-site tRNA. In Buchnera aphidicola subsp. Acyrthosiphon pisum (strain Tuc7), this protein is Small ribosomal subunit protein uS7.